Here is a 244-residue protein sequence, read N- to C-terminus: HTH-type transcriptional regulator RdgA (244 aa).

An HTH cro/C1-type domain is found at 9-62 (LKTARTAQGLSQKALGDMIGVSQAAIQKIEVGKASQTTKIVELSNNLRVRPEWL). The H-T-H motif DNA-binding region spans 20-39 (QKALGDMIGVSQAAIQKIEV).

Functionally, regulates pectin lyase production in response to DNA damage. The polypeptide is HTH-type transcriptional regulator RdgA (rdgA) (Pectobacterium carotovorum subsp. carotovorum (Erwinia carotovora subsp. carotovora)).